The sequence spans 225 residues: MNKRLVVKNLGRQDYEPVWKAMHTFTDERDENTCDEVWLVEHNPVFTQGQAGKEEHVLAAGDIPIVKSDRGGQVTYHGPGQLVAYVLINLRRKNIGVRELVTHIENTVINTLSHFNVESAARPDAPGVYVDNKKICSLGLRIRKGCSFHGLALNINMDLSPFLRINPCGYAGMEMIQLHDLVKDNMTVENKAEHVEDVHPLLIKELTTLLDYTDIEYLTESSNHE.

The region spanning 31-214 (ENTCDEVWLV…ELTTLLDYTD (184 aa)) is the BPL/LPL catalytic domain. Residues 70 to 77 (RGGQVTYH), 137 to 139 (SLG), and 150 to 152 (GLA) contribute to the substrate site. The active-site Acyl-thioester intermediate is Cys168.

The protein belongs to the LipB family.

It is found in the cytoplasm. It catalyses the reaction octanoyl-[ACP] + L-lysyl-[protein] = N(6)-octanoyl-L-lysyl-[protein] + holo-[ACP] + H(+). It functions in the pathway protein modification; protein lipoylation via endogenous pathway; protein N(6)-(lipoyl)lysine from octanoyl-[acyl-carrier-protein]: step 1/2. Its function is as follows. Catalyzes the transfer of endogenously produced octanoic acid from octanoyl-acyl-carrier-protein onto the lipoyl domains of lipoate-dependent enzymes. Lipoyl-ACP can also act as a substrate although octanoyl-ACP is likely to be the physiological substrate. The protein is Octanoyltransferase of Aliivibrio fischeri (strain ATCC 700601 / ES114) (Vibrio fischeri).